We begin with the raw amino-acid sequence, 113 residues long: Large ribosomal subunit protein bL17 (113 aa).

Belongs to the bacterial ribosomal protein bL17 family. As to quaternary structure, part of the 50S ribosomal subunit. Contacts protein L32.

The protein is Large ribosomal subunit protein bL17 of Syntrophomonas wolfei subsp. wolfei (strain DSM 2245B / Goettingen).